Reading from the N-terminus, the 1220-residue chain is DNA-directed RNA polymerase subunit beta (1220 aa).

This sequence belongs to the RNA polymerase beta chain family. The RNAP catalytic core consists of 2 alpha, 1 beta, 1 beta' and 1 omega subunit. When a sigma factor is associated with the core the holoenzyme is formed, which can initiate transcription.

It carries out the reaction RNA(n) + a ribonucleoside 5'-triphosphate = RNA(n+1) + diphosphate. Its function is as follows. DNA-dependent RNA polymerase catalyzes the transcription of DNA into RNA using the four ribonucleoside triphosphates as substrates. In Mesomycoplasma hyopneumoniae (strain 7448) (Mycoplasma hyopneumoniae), this protein is DNA-directed RNA polymerase subunit beta.